We begin with the raw amino-acid sequence, 123 residues long: MTPTPLTPYLPLAVVLLLAGGMAMLIPQITTRLGPRRPSAIKATSFEAGSESSGPARQRFAVKFYVVALLFIVFDVEAVFLYPWAVNFQALGWFGYVEMLVFAVTLVVGLIYIWKKGALDWES.

3 helical membrane-spanning segments follow: residues Leu-6–Ile-26, Val-66–Val-86, and Trp-93–Ile-113.

It belongs to the complex I subunit 3 family. NDH-1 is composed of 14 different subunits. Subunits NuoA, H, J, K, L, M, N constitute the membrane sector of the complex.

Its subcellular location is the cell inner membrane. The catalysed reaction is a quinone + NADH + 5 H(+)(in) = a quinol + NAD(+) + 4 H(+)(out). In terms of biological role, NDH-1 shuttles electrons from NADH, via FMN and iron-sulfur (Fe-S) centers, to quinones in the respiratory chain. The immediate electron acceptor for the enzyme in this species is believed to be ubiquinone. Couples the redox reaction to proton translocation (for every two electrons transferred, four hydrogen ions are translocated across the cytoplasmic membrane), and thus conserves the redox energy in a proton gradient. The polypeptide is NADH-quinone oxidoreductase subunit A (Myxococcus xanthus (strain DK1622)).